The chain runs to 313 residues: Porphobilinogen deaminase (313 aa).

Cysteine 242 carries the post-translational modification S-(dipyrrolylmethanemethyl)cysteine.

The protein belongs to the HMBS family. Monomer. Requires dipyrromethane as cofactor.

The catalysed reaction is 4 porphobilinogen + H2O = hydroxymethylbilane + 4 NH4(+). The protein operates within porphyrin-containing compound metabolism; protoporphyrin-IX biosynthesis; coproporphyrinogen-III from 5-aminolevulinate: step 2/4. Functionally, tetrapolymerization of the monopyrrole PBG into the hydroxymethylbilane pre-uroporphyrinogen in several discrete steps. The protein is Porphobilinogen deaminase of Erwinia tasmaniensis (strain DSM 17950 / CFBP 7177 / CIP 109463 / NCPPB 4357 / Et1/99).